The following is a 347-amino-acid chain: Cytoplasmic tRNA 2-thiolation protein 1 (347 aa).

S200 carries the post-translational modification Phosphoserine. A disordered region spans residues 315–347; it reads LAIGKGRRGLDEEGPPREPQPSRPLTSEPVPDF.

The protein belongs to the TtcA family. CTU1/NCS6/ATPBD3 subfamily. In terms of assembly, component of a complex at least composed of URM1, CTU2/NCS2 and CTU1/ATPBD3. May form a heterodimer with CTU2/NCS2.

The protein localises to the cytoplasm. It functions in the pathway tRNA modification; 5-methoxycarbonylmethyl-2-thiouridine-tRNA biosynthesis. In terms of biological role, plays a central role in 2-thiolation of mcm(5)S(2)U at tRNA wobble positions of tRNA(Lys), tRNA(Glu) and tRNA(Gln). Directly binds tRNAs and probably acts by catalyzing adenylation of tRNAs, an intermediate required for 2-thiolation. It is unclear whether it acts as a sulfurtransferase that transfers sulfur from thiocarboxylated URM1 onto the uridine of tRNAs at wobble position. This chain is Cytoplasmic tRNA 2-thiolation protein 1, found in Bos taurus (Bovine).